The chain runs to 423 residues: UDP-N-acetylglucosamine 1-carboxyvinyltransferase (423 aa).

21–22 (KN) provides a ligand contact to phosphoenolpyruvate. Position 92 (arginine 92) interacts with UDP-N-acetyl-alpha-D-glucosamine. Catalysis depends on cysteine 116, which acts as the Proton donor. At cysteine 116 the chain carries 2-(S-cysteinyl)pyruvic acid O-phosphothioketal. Residues aspartate 305 and valine 327 each coordinate UDP-N-acetyl-alpha-D-glucosamine.

This sequence belongs to the EPSP synthase family. MurA subfamily.

It is found in the cytoplasm. The catalysed reaction is phosphoenolpyruvate + UDP-N-acetyl-alpha-D-glucosamine = UDP-N-acetyl-3-O-(1-carboxyvinyl)-alpha-D-glucosamine + phosphate. The protein operates within cell wall biogenesis; peptidoglycan biosynthesis. Functionally, cell wall formation. Adds enolpyruvyl to UDP-N-acetylglucosamine. This Fervidobacterium nodosum (strain ATCC 35602 / DSM 5306 / Rt17-B1) protein is UDP-N-acetylglucosamine 1-carboxyvinyltransferase.